The primary structure comprises 698 residues: MNLLPKSSKEFGSADYWEKFFQQRGKTAFEWYGTYLELCEVLHKYIKPKEKVLVIGCGNSELSEQLYDVGYQDIVNIDISEVVIKQMKERNGSRRPHMSFLKMDMTQLEFPDATFQVVLDKGTLDAVLTDEEEVTLRQVDRMLAEVGRVLQVGGRYLCISLAQAHILKKAVGHFSREGWMVRAHQVASSQDRVSEAEPRFSLPVFAFVMTKFRPVPGSALQIFELCTQEQGKPVRLESADQLAEAVRERQYYAWLCSQLRRKAGLGSVSLDLCSGDTGEPRYTLHVVDNPAVKPSRDNHFAIFIIPQGRETEWLFGMEEGRKQLAASAGFRRLVTVALHRGQRYAGMESIQAELSARVMELAPAGLPPQQQVPFLSVGGDIGVRTVQHQDHSALSGDYVIEDVQGEDRWYFRRLIFLSNRNVVQSEARLLKDTSHRAQKKRKKDRKKQRPADTSEDFPPAPGQSIDKSYLCCEHHKAMVAGLALLRNPELLLETPLTLLVVGLGGGSLPLFVHDHFPKSRIDAVEIDPTMLEVATQWFGFSQSDRMKVHIADGLDYITSLAGEAPPHYDVIMFDVDSKDPTLGMSCPPPAFVDQVFLQKVKSILCHDGVFILNLVCRDVRLKDSVLAGLKAAFPLLYVRRIEGEVNEILFCQLHPEQKLATPELLEMAQVLERTLRKPGQGWDDTYVLSDMLKTVKIV.

Residue methionine 1 is modified to N-acetylmethionine. Serine 267 carries the post-translational modification Phosphoserine. Positions 431–461 are disordered; the sequence is KDTSHRAQKKRKKDRKKQRPADTSEDFPPAP. The span at 436 to 448 shows a compositional bias: basic residues; the sequence is RAQKKRKKDRKKQ.

This sequence belongs to the methyltransferase superfamily. As to quaternary structure, forms a tripartite complex containing GAB1, METTL13 and SPRY2. Within the complex interacts with GAB1 and SPRY2. In terms of tissue distribution, expressed in the inner ear (at protein level). Expression is detected in the cochlear duct, spiral limbus region, efferent and afferent nerves, and in spiral ganglion neurons (at protein level).

It localises to the cytoplasm. Its subcellular location is the nucleus. The protein resides in the mitochondrion. It catalyses the reaction L-lysyl-[protein] + S-adenosyl-L-methionine = N(6)-methyl-L-lysyl-[protein] + S-adenosyl-L-homocysteine + H(+). The enzyme catalyses N(6)-methyl-L-lysyl-[protein] + S-adenosyl-L-methionine = N(6),N(6)-dimethyl-L-lysyl-[protein] + S-adenosyl-L-homocysteine + H(+). It carries out the reaction N-terminal glycyl-L-lysyl-L-glutamyl-[protein] + 3 S-adenosyl-L-methionine = N-terminal N,N,N-trimethyl-glycyl-L-lysyl-L-glutamyl-[protein] + 3 S-adenosyl-L-homocysteine + 3 H(+). Functionally, dual methyltransferase that catalyzes methylation of elongation factor 1-alpha (EEF1A1 and EEF1A2) at two different positions, and is therefore involved in the regulation of mRNA translation. Via its C-terminus, methylates EEF1A1 and EEF1A2 at the N-terminal residue 'Gly-2'. Via its N-terminus dimethylates EEF1A1 and EEF1A2 at residue 'Lys-55'. Has no activity towards core histones H2A, H2B, H3 and H4. The chain is eEF1A lysine and N-terminal methyltransferase from Mus musculus (Mouse).